The sequence spans 238 residues: Glycerol-3-phosphate acyltransferase (238 aa).

Transmembrane regions (helical) follow at residues 5 to 25 (VIFG…SINF), 61 to 81 (FLVF…SAIL), 88 to 108 (FGAV…VFPI), 125 to 145 (IASL…AMIF), 149 to 169 (IVSL…IIPW), and 194 to 214 (AWYL…FTHI).

This sequence belongs to the PlsY family. In terms of assembly, probably interacts with PlsX.

It is found in the cell membrane. It carries out the reaction an acyl phosphate + sn-glycerol 3-phosphate = a 1-acyl-sn-glycero-3-phosphate + phosphate. It participates in lipid metabolism; phospholipid metabolism. Its function is as follows. Catalyzes the transfer of an acyl group from acyl-phosphate (acyl-PO(4)) to glycerol-3-phosphate (G3P) to form lysophosphatidic acid (LPA). This enzyme utilizes acyl-phosphate as fatty acyl donor, but not acyl-CoA or acyl-ACP. The sequence is that of Glycerol-3-phosphate acyltransferase from Mycoplasma mobile (strain ATCC 43663 / 163K / NCTC 11711) (Mesomycoplasma mobile).